Reading from the N-terminus, the 242-residue chain is MQNIDQQELDKFEKMAKSWWDPQGDFKPIHQLNPLRLSYIAQQANGLTGKKVLDVGCGGGILSESMAKQGAIVTGIDMSSAPLQVARKHALESGLHIDYQQITIEEFLQNQTALFAERGEDEKFDVITCMEMLEHVPDPSSIIACCKQLLKPNGVIFFSTINRTLKAWALVIIGAEYVLKMLPKGTHDYDKFIKPAELLHWCDEAQLTCLDMVGYHYNPLTGKFWLNKDVSANYMASFRIQS.

Positions 36, 56, 77, and 130 each coordinate S-adenosyl-L-methionine.

It belongs to the methyltransferase superfamily. UbiG/COQ3 family.

The catalysed reaction is a 3-demethylubiquinol + S-adenosyl-L-methionine = a ubiquinol + S-adenosyl-L-homocysteine + H(+). It catalyses the reaction a 3-(all-trans-polyprenyl)benzene-1,2-diol + S-adenosyl-L-methionine = a 2-methoxy-6-(all-trans-polyprenyl)phenol + S-adenosyl-L-homocysteine + H(+). It participates in cofactor biosynthesis; ubiquinone biosynthesis. Its function is as follows. O-methyltransferase that catalyzes the 2 O-methylation steps in the ubiquinone biosynthetic pathway. In Pasteurella multocida (strain Pm70), this protein is Ubiquinone biosynthesis O-methyltransferase.